The sequence spans 398 residues: S-adenosylmethionine synthase (398 aa).

Residue 136–141 (GTGSSD) coordinates ATP.

Belongs to the AdoMet synthase 2 family. The cofactor is Mg(2+).

The enzyme catalyses L-methionine + ATP + H2O = S-adenosyl-L-methionine + phosphate + diphosphate. Its pathway is amino-acid biosynthesis; S-adenosyl-L-methionine biosynthesis; S-adenosyl-L-methionine from L-methionine: step 1/1. Functionally, catalyzes the formation of S-adenosylmethionine from methionine and ATP. The sequence is that of S-adenosylmethionine synthase from Methanosarcina acetivorans (strain ATCC 35395 / DSM 2834 / JCM 12185 / C2A).